The primary structure comprises 268 residues: Regulatory protein zeste (268 aa).

Residues 1 to 72 (TAEEKEVLYT…WLNSRLRKQY (72 aa)) mediate DNA binding. Low complexity predominate over residues 94–108 (VSVASAVPQQQQQQH). The segment at 94–133 (VSVASAVPQQQQQQHHQQHDNVKEEPEYQISPDASEHNPQ) is disordered. A compositionally biased stretch (basic and acidic residues) spans 110–119 (QQHDNVKEEP).

In terms of assembly, self-associates forming complexes of several hundred monomers.

The protein resides in the nucleus. In terms of biological role, involved in transvection phenomena (= synapsis-dependent gene expression), where the synaptic pairing of chromosomes carrying genes with which zeste interacts influences the expression of these genes. Zeste binds to DNA and stimulates transcription from a nearby promoter. The protein is Regulatory protein zeste (z) of Drosophila sechellia (Fruit fly).